Here is a 243-residue protein sequence, read N- to C-terminus: Venom nerve growth factor 2 (243 aa).

Positions 1–18 (MSMLCYTLIIAFLIGIWA) are cleaved as a signal peptide. Positions 19-125 (APKSEDNVPL…TLNRNIRAKR (107 aa)) are excised as a propeptide. A compositionally biased stretch (basic and acidic residues) spans 47-66 (GLKTSRNTDQRHPAPKKAED). The disordered stretch occupies residues 47 to 67 (GLKTSRNTDQRHPAPKKAEDQ). Cystine bridges form between Cys139–Cys204 and Cys192–Cys234. N-linked (GlcNAc...) asparagine glycosylation is present at Asn148.

Belongs to the NGF-beta family. In terms of assembly, homodimer; non-covalently linked. Expressed by the venom gland.

The protein localises to the secreted. In terms of biological role, nerve growth factor is important for the development and maintenance of the sympathetic and sensory nervous systems. It stimulates division and differentiation of sympathetic and embryonic sensory neurons as well as basal forebrain cholinergic neurons in the brain. Its relevance in the snake venom is not clear. However, it has been shown to inhibit metalloproteinase-dependent proteolysis of platelet glycoprotein Ib alpha, suggesting a metalloproteinase inhibition to prevent metalloprotease autodigestion and/or protection against prey proteases. Binds a lipid between the two protein chains in the homodimer. The lipid-bound form promotes histamine relase from mouse mast cells, contrary to the lipid-free form. This Pseudonaja textilis (Eastern brown snake) protein is Venom nerve growth factor 2.